The sequence spans 311 residues: Putative ABC transporter ATP-binding protein MG467 (311 aa).

The 227-residue stretch at 84–310 folds into the ABC transporter domain; the sequence is ITINKMWKNV…IVSNQLVRPL (227 aa). Residue 122 to 129 participates in ATP binding; the sequence is GSSGSGKT.

Belongs to the ABC transporter superfamily.

This is Putative ABC transporter ATP-binding protein MG467 from Mycoplasma genitalium (strain ATCC 33530 / DSM 19775 / NCTC 10195 / G37) (Mycoplasmoides genitalium).